Here is a 317-residue protein sequence, read N- to C-terminus: Sulfate adenylyltransferase subunit 2 (317 aa).

2 disordered regions span residues 1–21 (MPDSRPDTELSNPQSAKAPLD) and 298–317 (RAIDRDQSGSMEKKKREGYF).

It belongs to the PAPS reductase family. CysD subfamily. Heterodimer composed of CysD, the smaller subunit, and CysN.

The catalysed reaction is sulfate + ATP + H(+) = adenosine 5'-phosphosulfate + diphosphate. Its pathway is sulfur metabolism; hydrogen sulfide biosynthesis; sulfite from sulfate: step 1/3. Functionally, with CysN forms the ATP sulfurylase (ATPS) that catalyzes the adenylation of sulfate producing adenosine 5'-phosphosulfate (APS) and diphosphate, the first enzymatic step in sulfur assimilation pathway. APS synthesis involves the formation of a high-energy phosphoric-sulfuric acid anhydride bond driven by GTP hydrolysis by CysN coupled to ATP hydrolysis by CysD. The polypeptide is Sulfate adenylyltransferase subunit 2 (Rhizobium etli (strain CIAT 652)).